The chain runs to 92 residues: PqqA binding protein (92 aa).

The protein belongs to the PqqD family. As to quaternary structure, monomer. Interacts with PqqE.

Its pathway is cofactor biosynthesis; pyrroloquinoline quinone biosynthesis. In terms of biological role, functions as a PqqA binding protein and presents PqqA to PqqE, in the pyrroloquinoline quinone (PQQ) biosynthetic pathway. This chain is PqqA binding protein, found in Klebsiella pneumoniae (strain 342).